We begin with the raw amino-acid sequence, 344 residues long: Nuclear distribution protein nudE-like 1-B (344 aa).

Positions 26 to 189 (YKKSCHDAQE…ELAVRERTSD (164 aa)) form a coiled coil.

It belongs to the nudE family. In terms of processing, phosphorylated in mitosis.

Its subcellular location is the cytoplasm. It localises to the cytoskeleton. The protein resides in the microtubule organizing center. It is found in the centrosome. The protein localises to the spindle. In terms of biological role, required for organization of the cellular microtubule array and microtubule anchoring at the centrosome. Positively regulates the activity of the minus-end directed microtubule motor protein dynein. May enhance dynein-mediated microtubule sliding by targeting dynein to the microtubule plus end. This Danio rerio (Zebrafish) protein is Nuclear distribution protein nudE-like 1-B (ndel1b).